Reading from the N-terminus, the 414-residue chain is Probable sugar-binding periplasmic protein (414 aa).

A signal peptide spans 1-22 (MRKFMTTTAVAALMLAATAARA).

It belongs to the bacterial solute-binding protein 1 family.

The protein resides in the periplasm. Part of a binding-protein-dependent transport system for a sugar. The sequence is that of Probable sugar-binding periplasmic protein from Rhizobium meliloti (strain 1021) (Ensifer meliloti).